A 129-amino-acid chain; its full sequence is Small ribosomal subunit protein uS11 (129 aa).

The protein belongs to the universal ribosomal protein uS11 family. Part of the 30S ribosomal subunit. Interacts with proteins S7 and S18. Binds to IF-3.

Located on the platform of the 30S subunit, it bridges several disparate RNA helices of the 16S rRNA. Forms part of the Shine-Dalgarno cleft in the 70S ribosome. The polypeptide is Small ribosomal subunit protein uS11 (Psychromonas ingrahamii (strain DSM 17664 / CCUG 51855 / 37)).